The following is a 203-amino-acid chain: Chaperonin-like RbcX protein 2, chloroplastic (203 aa).

The N-terminal 78 residues, 1–78 (MVSAWFVVGS…RKSKKLLIVN (78 aa)), are a transit peptide targeting the chloroplast.

It belongs to the RbcX family. Homodimer. Interacts with rbcL, atpB and RBCS-1B.

The protein localises to the plastid. It localises to the chloroplast stroma. Chaperone involved in RuBisCO assembly process. In Arabidopsis thaliana (Mouse-ear cress), this protein is Chaperonin-like RbcX protein 2, chloroplastic.